The chain runs to 122 residues: Small ribosomal subunit protein uS13 (122 aa).

The segment at 99–122 is disordered; sequence RGQRTHTNARTRKGPAKAIAGKKK.

This sequence belongs to the universal ribosomal protein uS13 family. In terms of assembly, part of the 30S ribosomal subunit. Forms a loose heterodimer with protein S19. Forms two bridges to the 50S subunit in the 70S ribosome.

Its function is as follows. Located at the top of the head of the 30S subunit, it contacts several helices of the 16S rRNA. In the 70S ribosome it contacts the 23S rRNA (bridge B1a) and protein L5 of the 50S subunit (bridge B1b), connecting the 2 subunits; these bridges are implicated in subunit movement. Contacts the tRNAs in the A and P-sites. The protein is Small ribosomal subunit protein uS13 of Rhodopseudomonas palustris (strain BisA53).